Consider the following 548-residue polypeptide: Protein swallow (548 aa).

Disordered stretches follow at residues 67–109 (AKTC…GRSS), 184–206 (NCQTHSNSDSNYNSNSNNSSSSF), and 358–428 (FSSV…ELIS). Over residues 79–91 (QEDEDDYDEDVDG) the composition is skewed to acidic residues. Low complexity predominate over residues 189–205 (SNSDSNYNSNSNNSSSS). Residues Ser362 and Ser368 each carry the phosphoserine modification. A compositionally biased stretch (polar residues) spans 388-402 (APNNSETSQPSSNDS). Residues 406-420 (VEAHEEERPSSRRQW) show a composition bias toward basic and acidic residues. Phosphoserine occurs at positions 463, 471, 475, 483, 485, and 487.

As to quaternary structure, may be a homo- or heterodimer.

It is found in the nucleus. Functionally, has a role in localizing bicoid mRNA at the anterior margin of the oocyte during oogenesis, and a poorly characterized role in nuclear divisions in early embryogenesis. The sequence is that of Protein swallow (swa) from Drosophila melanogaster (Fruit fly).